The chain runs to 196 residues: Pyridoxine/pyridoxamine 5'-phosphate oxidase (196 aa).

Residues 44 to 49, 59 to 60, Arg65, Lys66, and Gln88 each bind FMN; these read RTVLLK and YT. A substrate-binding site is contributed by Lys49. Residues Tyr106, Arg110, and Ser114 each coordinate substrate. FMN contacts are provided by residues 123–124 and Trp169; that span reads QS. Position 175–177 (175–177) interacts with substrate; it reads RLH. Arg179 is an FMN binding site.

It belongs to the pyridoxamine 5'-phosphate oxidase family. As to quaternary structure, homodimer. FMN is required as a cofactor.

The enzyme catalyses pyridoxamine 5'-phosphate + O2 + H2O = pyridoxal 5'-phosphate + H2O2 + NH4(+). It carries out the reaction pyridoxine 5'-phosphate + O2 = pyridoxal 5'-phosphate + H2O2. Its pathway is cofactor metabolism; pyridoxal 5'-phosphate salvage; pyridoxal 5'-phosphate from pyridoxamine 5'-phosphate: step 1/1. The protein operates within cofactor metabolism; pyridoxal 5'-phosphate salvage; pyridoxal 5'-phosphate from pyridoxine 5'-phosphate: step 1/1. In terms of biological role, catalyzes the oxidation of either pyridoxine 5'-phosphate (PNP) or pyridoxamine 5'-phosphate (PMP) into pyridoxal 5'-phosphate (PLP). The chain is Pyridoxine/pyridoxamine 5'-phosphate oxidase from Alkalilimnicola ehrlichii (strain ATCC BAA-1101 / DSM 17681 / MLHE-1).